A 349-amino-acid polypeptide reads, in one-letter code: Prostaglandin reductase 1 (349 aa).

Threonine 18 bears the Phosphothreonine mark. Serine 20 carries the post-translational modification Phosphoserine. NADP(+) contacts are provided by residues 152–155, lysine 178, tyrosine 193, asparagine 217, 239–245, 270–272, and asparagine 321; these read GAVG, CGAISMY, and FIF. At lysine 178 the chain carries N6-(2-hydroxyisobutyryl)lysine; alternate. The residue at position 178 (lysine 178) is an N6-acetyllysine; alternate.

This sequence belongs to the NADP-dependent oxidoreductase L4BD family. Monomer or homodimer.

The protein localises to the cytoplasm. It carries out the reaction 13,14-dihydro-15-oxo-prostaglandin E1 + NADP(+) = 15-oxoprostaglandin E1 + NADPH + H(+). It catalyses the reaction 13,14-dihydro-15-oxo-prostaglandin E2 + NADP(+) = 15-oxoprostaglandin E2 + NADPH + H(+). The catalysed reaction is 13,14-dihydro-15-oxo-prostaglandin F1alpha + NADP(+) = 15-oxoprostaglandin F1alpha + NADPH + H(+). The enzyme catalyses 13,14-dihydro-15-oxo-PGF2alpha + NADP(+) = 15-oxoprostaglandin F2alpha + NADPH + H(+). It carries out the reaction leukotriene B4 + NADP(+) = 12-oxo-leukotriene B4 + NADPH + H(+). It catalyses the reaction 20-hydroxy-leukotriene B4 + NADP(+) = 12-oxo-20-hydroxy-leukotriene B4 + NADPH + H(+). The catalysed reaction is 6-trans-leukotriene B4 + NADP(+) = 12-oxo-(5S)-hydroxy-(6E,8E,10E,14Z)-eicosatetraenoate + NADPH + H(+). The enzyme catalyses (5S,12S)-dihydroxy-(6E,10E,12E,14Z)-eicosatetraenoate + NADP(+) = 12-oxo-(5S)-hydroxy-(6E,8E,10E,14Z)-eicosatetraenoate + NADPH + H(+). It carries out the reaction an n-alkanal + NADP(+) = an alk-2-enal + NADPH + H(+). It catalyses the reaction hexanal + NADP(+) = (E)-hex-2-enal + NADPH + H(+). The catalysed reaction is octanal + NADP(+) = (2E)-octenal + NADPH + H(+). The enzyme catalyses decanal + NADP(+) = (2E)-decenal + NADPH + H(+). It carries out the reaction dodecanal + NADP(+) = (2E)-dodecenal + NADPH + H(+). It catalyses the reaction 4-hydroxynonanal + NADP(+) = (E)-4-hydroxynon-2-enal + NADPH + H(+). The catalysed reaction is pentan-2-one + NADP(+) = (E)-pent-3-en-2-one + NADPH + H(+). The enzyme catalyses nonan-2-one + NADP(+) = (3E)-nonen-2-one + NADPH + H(+). In terms of biological role, NAD(P)H-dependent oxidoreductase involved in metabolic inactivation of pro- and anti-inflammatory eicosanoids: prostaglandins (PG), leukotrienes (LT) and lipoxins (LX). Catalyzes with high efficiency the reduction of the 13,14 double bond of 15-oxoPGs, including 15-oxo-PGE1, 15-oxo-PGE2, 15-oxo-PGF1-alpha and 15-oxo-PGF2-alpha. Catalyzes with lower efficiency the oxidation of the hydroxyl group at C12 of LTB4 and its derivatives, converting them into biologically less active 12-oxo-LTB4 metabolites. Reduces 15-oxo-LXA4 to 13,14 dihydro-15-oxo-LXA4, enhancing neutrophil recruitment at the inflammatory site. Plays a role in metabolic detoxification of alkenals and ketones. Reduces alpha,beta-unsaturated alkenals and ketones, particularly those with medium-chain length, showing highest affinity toward (2E)-decenal and (3E)-3-nonen-2-one. May inactivate 4-hydroxy-2-nonenal, a cytotoxic lipid constituent of oxidized low-density lipoprotein particles. This Oryctolagus cuniculus (Rabbit) protein is Prostaglandin reductase 1 (PTGR1).